The sequence spans 279 residues: Urease accessory protein UreD (279 aa).

The protein belongs to the UreD family. As to quaternary structure, ureD, UreF and UreG form a complex that acts as a GTP-hydrolysis-dependent molecular chaperone, activating the urease apoprotein by helping to assemble the nickel containing metallocenter of UreC. The UreE protein probably delivers the nickel.

It localises to the cytoplasm. Required for maturation of urease via the functional incorporation of the urease nickel metallocenter. The polypeptide is Urease accessory protein UreD (Nostoc sp. (strain PCC 7120 / SAG 25.82 / UTEX 2576)).